A 184-amino-acid chain; its full sequence is Photosystem I assembly protein Ycf4 (184 aa).

Helical transmembrane passes span 22–42 (FCWAFILFLGSLGFLLVGTSS) and 57–77 (IIFFPQGIVMSFYGIAGLFIS).

This sequence belongs to the Ycf4 family.

Its subcellular location is the plastid. The protein localises to the chloroplast thylakoid membrane. In terms of biological role, seems to be required for the assembly of the photosystem I complex. In Draba nemorosa (Woodland whitlowgrass), this protein is Photosystem I assembly protein Ycf4.